The chain runs to 135 residues: MAVSSGTSGMLATCLFMLLFATMQIYKSQLTSSQPMAIVGGFLGSVLFILILTAISNFETHFFGRNFQTKLIPEVVIALVIAMAASGMVHRVCITTCLIFSIVALYYVSRISIKVHGSGAGTATAIPVTKGKKGK.

4 helical membrane passes run 1 to 21, 35 to 55, 69 to 89, and 93 to 113; these read MAVS…LLFA, PMAI…LTAI, TKLI…SGMV, and CITT…RISI.

It belongs to the KRTCAP2 family. As to quaternary structure, component of the oligosaccharyltransferase (OST) complex.

Its subcellular location is the membrane. In terms of biological role, subunit of the oligosaccharyl transferase (OST) complex that catalyzes the initial transfer of a defined glycan (Glc(3)Man(9)GlcNAc(2) in eukaryotes) from the lipid carrier dolichol-pyrophosphate to an asparagine residue within an Asn-X-Ser/Thr consensus motif in nascent polypeptide chains, the first step in protein N-glycosylation. N-glycosylation occurs cotranslationally and the complex associates with the Sec61 complex at the channel-forming translocon complex that mediates protein translocation across the endoplasmic reticulum (ER). All subunits are required for a maximal enzyme activity. In Ixodes scapularis (Black-legged tick), this protein is Protein KRTCAP2 homolog.